Here is a 136-residue protein sequence, read N- to C-terminus: Globin CTP-III (136 aa).

The Globin domain occupies 1 to 136 (LSADQISTVQ…TFFGMIFSKM (136 aa)). A heme b-binding site is contributed by His87.

This sequence belongs to the globin family. Monomer.

The polypeptide is Globin CTP-III (Chironomus thummi piger (Midge)).